A 32-amino-acid chain; its full sequence is SLGGFLKGVGKVLAGVGKVVADQFGNLLEAGQ.

A Glutamine amide modification is found at Gln32.

As to expression, expressed by the skin glands.

Its subcellular location is the secreted. Functionally, antimicrobial peptide. The chain is Dermatoxin-J3 from Phasmahyla jandaia (Jandaia leaf frog).